The following is a 52-amino-acid chain: Light-harvesting protein B800/830/1020 alpha-1 chain (52 aa).

The Cytoplasmic portion of the chain corresponds to 1–12; it reads MWRIWKVFDPRR. The chain crosses the membrane as a helical span at residues 13 to 33; sequence ILIATAIWLIIIALTIHVILM. Histidine 29 contributes to the a bacteriochlorophyll binding site. The Periplasmic portion of the chain corresponds to 34–52; it reads TTERFNWLEGAPAAEYYSS.

The protein belongs to the antenna complex alpha subunit family. In terms of assembly, the core complex is formed by different alpha and beta chains, binding bacteriochlorophyll molecules, and arranged most probably in tetrameric structures disposed around the reaction center. The non-pigmented gamma chains may constitute additional components.

The protein localises to the cell inner membrane. Functionally, antenna complexes are light-harvesting systems, which transfer the excitation energy to the reaction centers. The sequence is that of Light-harvesting protein B800/830/1020 alpha-1 chain from Halorhodospira halochloris (Ectothiorhodospira halochloris).